A 352-amino-acid polypeptide reads, in one-letter code: S-adenosylmethionine:tRNA ribosyltransferase-isomerase (352 aa).

It belongs to the QueA family. In terms of assembly, monomer.

Its subcellular location is the cytoplasm. The enzyme catalyses 7-aminomethyl-7-carbaguanosine(34) in tRNA + S-adenosyl-L-methionine = epoxyqueuosine(34) in tRNA + adenine + L-methionine + 2 H(+). The protein operates within tRNA modification; tRNA-queuosine biosynthesis. Its function is as follows. Transfers and isomerizes the ribose moiety from AdoMet to the 7-aminomethyl group of 7-deazaguanine (preQ1-tRNA) to give epoxyqueuosine (oQ-tRNA). The chain is S-adenosylmethionine:tRNA ribosyltransferase-isomerase from Dechloromonas aromatica (strain RCB).